The chain runs to 918 residues: Protein SEY1 homolog (918 aa).

Residues methionine 1–asparagine 701 are Cytoplasmic-facing. A GB1/RHD3-type G domain is found at glycine 46 to serine 280. Residue glycine 56 to serine 63 participates in GTP binding. Residues serine 554–lysine 626 adopt a coiled-coil conformation. The chain crosses the membrane as a helical span at residues isoleucine 702–phenylalanine 722. Over arginine 723 to leucine 725 the chain is Lumenal. The chain crosses the membrane as a helical span at residues leucine 726 to alanine 746. Topologically, residues asparagine 747–tryptophan 918 are cytoplasmic.

The protein belongs to the TRAFAC class dynamin-like GTPase superfamily. GB1/RHD3 GTPase family. RHD3 subfamily.

It localises to the endoplasmic reticulum membrane. In terms of biological role, probable GTP-binding protein that may be involved in cell development. This chain is Protein SEY1 homolog, found in Theileria annulata.